Here is a 311-residue protein sequence, read N- to C-terminus: Porphobilinogen deaminase (311 aa).

An S-(dipyrrolylmethanemethyl)cysteine modification is found at Cys245.

It belongs to the HMBS family. As to quaternary structure, monomer. Dipyrromethane serves as cofactor.

It catalyses the reaction 4 porphobilinogen + H2O = hydroxymethylbilane + 4 NH4(+). It participates in porphyrin-containing compound metabolism; protoporphyrin-IX biosynthesis; coproporphyrinogen-III from 5-aminolevulinate: step 2/4. Tetrapolymerization of the monopyrrole PBG into the hydroxymethylbilane pre-uroporphyrinogen in several discrete steps. The polypeptide is Porphobilinogen deaminase (Deinococcus deserti (strain DSM 17065 / CIP 109153 / LMG 22923 / VCD115)).